A 550-amino-acid polypeptide reads, in one-letter code: Amino acid transporter AVT1C (550 aa).

Positions 1–11 (MNHVPSDQSFY) are enriched in polar residues. Disordered regions lie at residues 1-44 (MNHV…ENQA) and 128-148 (QGLL…EKSS). Residues 20–34 (RKDYVEEDGGSHSDS) show a composition bias toward basic and acidic residues. The next 11 membrane-spanning stretches (helical) occupy residues 165 to 185 (AVLN…PYAA), 190 to 210 (WLGL…GILL), 237 to 257 (IFVS…YIIL), 283 to 303 (LFAL…DLSV), 307 to 327 (ISAG…WIGL), 342 to 362 (LSTL…HAVF), 377 to 397 (AVLL…AVMG), 422 to 442 (IAVW…ISPV), 462 to 484 (IGIR…FFGL), 488 to 510 (LIGS…LSIV), and 521 to 541 (LCVL…YSAL).

Belongs to the amino acid/polyamine transporter 2 family. Amino acid/auxin permease (AAAP) (TC 2.A.18.5) subfamily.

It localises to the membrane. The protein is Amino acid transporter AVT1C of Arabidopsis thaliana (Mouse-ear cress).